A 256-amino-acid chain; its full sequence is tRNA (guanine-N(7)-)-methyltransferase (256 aa).

Positions 85, 110, 137, and 159 each coordinate S-adenosyl-L-methionine. The active site involves Asp-159. Residues Lys-163 and Asp-195 each contribute to the substrate site.

Belongs to the class I-like SAM-binding methyltransferase superfamily. TrmB family.

It carries out the reaction guanosine(46) in tRNA + S-adenosyl-L-methionine = N(7)-methylguanosine(46) in tRNA + S-adenosyl-L-homocysteine. The protein operates within tRNA modification; N(7)-methylguanine-tRNA biosynthesis. Functionally, catalyzes the formation of N(7)-methylguanine at position 46 (m7G46) in tRNA. This chain is tRNA (guanine-N(7)-)-methyltransferase, found in Rhodopseudomonas palustris (strain BisB5).